The chain runs to 374 residues: MRAIGLMSGTSLDGIDVALIESDGETVRVRRGHNGRIGPLGPTGYRAYSDEDRALLRRALAEAEAIAVRTDRPGCLREAEERVTRLHAEAVENFLTENGLTPADIDLIGFHGQTVIHRPGQGLTVQIGDGARLSRHLGIPVVSDFRQADVAAGGQGAPLVPIFHRALARASGFEGSLAILNIGGVANVTLIAGNGDLLAFDTGPGNALIDDWMSERASRPFDARGSTAAAGRPDEALLAWLLVHPYFTRRPPKSLDRNSFSHRLVGPLSTEDGAATLTAFTVRAVARALDFASEPPRRWIVAGGGARNDEMLRLLRHHLRAEVTPADEIGWSSAFLEAQAFAHLAVRAWNGLPITFPSTTGVSAPMTGGVTARP.

9–16 (GTSLDGID) is an ATP binding site.

It belongs to the anhydro-N-acetylmuramic acid kinase family.

The catalysed reaction is 1,6-anhydro-N-acetyl-beta-muramate + ATP + H2O = N-acetyl-D-muramate 6-phosphate + ADP + H(+). It participates in amino-sugar metabolism; 1,6-anhydro-N-acetylmuramate degradation. Its pathway is cell wall biogenesis; peptidoglycan recycling. Catalyzes the specific phosphorylation of 1,6-anhydro-N-acetylmuramic acid (anhMurNAc) with the simultaneous cleavage of the 1,6-anhydro ring, generating MurNAc-6-P. Is required for the utilization of anhMurNAc either imported from the medium or derived from its own cell wall murein, and thus plays a role in cell wall recycling. The polypeptide is Anhydro-N-acetylmuramic acid kinase (Methylobacterium nodulans (strain LMG 21967 / CNCM I-2342 / ORS 2060)).